A 275-amino-acid polypeptide reads, in one-letter code: Dermonecrotic toxin LamSicTox-alphaIV1iii (275 aa).

His-5 is an active-site residue. Residues Glu-25 and Asp-27 each contribute to the Mg(2+) site. The active-site Nucleophile is His-41. 2 disulfide bridges follow: Cys-45-Cys-51 and Cys-47-Cys-192. Residue Asp-85 participates in Mg(2+) binding.

Belongs to the arthropod phospholipase D family. Class II subfamily. It depends on Mg(2+) as a cofactor. Expressed by the venom gland.

Its subcellular location is the secreted. It catalyses the reaction an N-(acyl)-sphingosylphosphocholine = an N-(acyl)-sphingosyl-1,3-cyclic phosphate + choline. It carries out the reaction an N-(acyl)-sphingosylphosphoethanolamine = an N-(acyl)-sphingosyl-1,3-cyclic phosphate + ethanolamine. The enzyme catalyses a 1-acyl-sn-glycero-3-phosphocholine = a 1-acyl-sn-glycero-2,3-cyclic phosphate + choline. The catalysed reaction is a 1-acyl-sn-glycero-3-phosphoethanolamine = a 1-acyl-sn-glycero-2,3-cyclic phosphate + ethanolamine. Functionally, dermonecrotic toxins cleave the phosphodiester linkage between the phosphate and headgroup of certain phospholipids (sphingolipid and lysolipid substrates), forming an alcohol (often choline) and a cyclic phosphate. This toxin acts on sphingomyelin (SM). It may also act on ceramide phosphoethanolamine (CPE), lysophosphatidylcholine (LPC) and lysophosphatidylethanolamine (LPE), but not on lysophosphatidylserine (LPS), and lysophosphatidylglycerol (LPG). It acts by transphosphatidylation, releasing exclusively cyclic phosphate products as second products. Induces dermonecrosis, hemolysis, increased vascular permeability, edema, inflammatory response, and platelet aggregation. The polypeptide is Dermonecrotic toxin LamSicTox-alphaIV1iii (Loxosceles amazonica (Recluse spider)).